The sequence spans 311 residues: Probable cell division protein WhiA (311 aa).

The H-T-H motif DNA-binding region spans 277 to 311 (TLKEVADQIPDGPISKSGVNHRFKKLHELAETLKE).

This sequence belongs to the WhiA family.

Its function is as follows. Involved in cell division and chromosome segregation. This is Probable cell division protein WhiA from Lactobacillus helveticus (strain DPC 4571).